The sequence spans 442 residues: Trigger factor (442 aa).

The region spanning 163-248 (YDRVTINYCI…IIKIEKKQEL (86 aa)) is the PPIase FKBP-type domain.

Belongs to the FKBP-type PPIase family. Tig subfamily.

It localises to the cytoplasm. The catalysed reaction is [protein]-peptidylproline (omega=180) = [protein]-peptidylproline (omega=0). In terms of biological role, involved in protein export. Acts as a chaperone by maintaining the newly synthesized protein in an open conformation. Functions as a peptidyl-prolyl cis-trans isomerase. The protein is Trigger factor of Buchnera aphidicola subsp. Acyrthosiphon pisum (strain 5A).